Reading from the N-terminus, the 699-residue chain is Ciliated left-right organizer metallopeptidase (699 aa).

The signal sequence occupies residues 1-18; sequence MKMWRLLLLGVATGRCLH. Residues 19 to 663 are Extracellular-facing; the sequence is EETQKSVRLL…SLDHNPSMTE (645 aa). H238 provides a ligand contact to Zn(2+). The active site involves E239. Positions 242 and 318 each coordinate Zn(2+). The helical transmembrane segment at 664–684 threads the bilayer; that stretch reads LLLSTGFCLLVLILVGALGTL. At 685–699 the chain is on the cytoplasmic side; that stretch reads AYQKRAMLQVAPSTT.

It belongs to the peptidase M8 family. The cofactor is Zn(2+). As to expression, specifically expressed in ciliated left-right organizer.

The protein localises to the membrane. Its function is as follows. Putative metalloproteinase that plays a role in left-right patterning process. The polypeptide is Ciliated left-right organizer metallopeptidase (Mus musculus (Mouse)).